We begin with the raw amino-acid sequence, 897 residues long: 4-hydroxyphenylacetate decarboxylase glycyl radical subunit (897 aa).

The region spanning 35 to 770 (ESTQKLMDIY…VTLATADGRL (736 aa)) is the PFL domain. 4-hydroxyphenylacetate is bound by residues Ser-344 and Cys-503. Cys-503 serves as the catalytic Cysteine radical intermediate. Glu-505 functions as the Proton donor in the catalytic mechanism. Residues His-536 and Glu-637 each coordinate 4-hydroxyphenylacetate. In terms of domain architecture, Glycine radical spans 778 to 897 (GSVSAAAGTD…EVIYRTEYDK (120 aa)). At Gly-873 the chain carries Glycine radical.

It belongs to the glycyl radical enzyme (GRE) family. HPAD subfamily. Heterooctamer consisting of 4 large (HpdB) subunits and 4 small (HpdC) subunits, arranged as a tetramer of heterodimers. Also forms a catalytically inactive homodimer. In terms of processing, requires the activating protein CsdA to generate the key active site glycyl radical that is involved in catalysis. Post-translationally, phosphorylated on serine. Phosphorylation may trigger the formation of the active heterooctamers and thereby regulates enzyme activity.

It catalyses the reaction 4-hydroxyphenylacetate + H(+) = 4-methylphenol + CO2. The enzyme catalyses 3,4-dihydroxyphenylacetate + H(+) = 4-methylcatechol + CO2. Functionally, glycyl radical subunit of the HPA decarboxylase that decarboxylates phenylacetates with a hydroxyl group in the p-position. Active toward 4-hydroxyphenylacetate and 3,4-dihydroxyphenylacetate, forming 4-methylphenol and 4-methylcatechol, respectively. Is likely involved in the catabolism of aromatic amino acids such as tyrosine fermentation. 4-methylphenol (p-cresol) formation provides metabolic toxicity, which allows an active suppression of other microbes and may provide growth advantages for the producers in highly competitive environments. The large subunit is the catalytic subunit that binds the substrate. The protein is 4-hydroxyphenylacetate decarboxylase glycyl radical subunit of Clostridium scatologenes.